The following is a 374-amino-acid chain: UPF0496 protein At3g28270 (374 aa).

Residues 171–210 (KVLTTQFERIKKQQESLLEEVSETRKKIQDEISNLEKKTL) adopt a coiled-coil conformation. 2 consecutive transmembrane segments (helical) span residues 214–234 (VVFGAAFAIVAVASIALIATG) and 235–255 (VGAAAGFGALAAPLLAAGWAG). A coiled-coil region spans residues 256-321 (VYTTLDKKKD…MLKLVDNAID (66 aa)).

The protein belongs to the UPF0496 family.

Its subcellular location is the membrane. This chain is UPF0496 protein At3g28270, found in Arabidopsis thaliana (Mouse-ear cress).